Consider the following 206-residue polypeptide: Glycerol-3-phosphate acyltransferase (206 aa).

6 helical membrane passes run 6 to 26 (IFLAFLCIGVSYSLGSFPSGF), 57 to 77 (KAALIVFLIDVSKGIGSILIA), 86 to 106 (FHVICGIAALSGHIWPIWLNW), 118 to 138 (VFLGISWQVGLASLGIFMAVL), 143 to 163 (IVSLSSISAAISLPILMFLSL), and 165 to 185 (EASFLNAYIIASFAAMIMVLW).

This sequence belongs to the PlsY family. Probably interacts with PlsX.

It is found in the cell inner membrane. It carries out the reaction an acyl phosphate + sn-glycerol 3-phosphate = a 1-acyl-sn-glycero-3-phosphate + phosphate. Its pathway is lipid metabolism; phospholipid metabolism. Catalyzes the transfer of an acyl group from acyl-phosphate (acyl-PO(4)) to glycerol-3-phosphate (G3P) to form lysophosphatidic acid (LPA). This enzyme utilizes acyl-phosphate as fatty acyl donor, but not acyl-CoA or acyl-ACP. The sequence is that of Glycerol-3-phosphate acyltransferase from Prochlorococcus marinus (strain MIT 9211).